An 83-amino-acid polypeptide reads, in one-letter code: Small ribosomal subunit protein bS16 (83 aa).

This sequence belongs to the bacterial ribosomal protein bS16 family.

The chain is Small ribosomal subunit protein bS16 from Azotobacter vinelandii (strain DJ / ATCC BAA-1303).